The following is a 225-amino-acid chain: MAVQQYGVLKGIVLDMKRETDDDSPHFQVKMLGEENTYYRCAINVMSSSEESEVLYLADDQFDSGSITILPNMPYGYTRINEANREVALDYVRGNLFDPREMKPLPHEITGPDNDLNDFIETYMKKAQDEKTPVYIFGSKFGPEQAADKIFGFTPTNGMHNIHMNQGNAMDTRWKKDNGSWHDGGILIQFADQWAAVFLAFLSQSWCTDENGNPVRDCDHTQTSA.

This is an uncharacterized protein from Bacillus subtilis (strain 168).